The chain runs to 86 residues: Small ribosomal subunit protein bS20 (86 aa).

The protein belongs to the bacterial ribosomal protein bS20 family.

Functionally, binds directly to 16S ribosomal RNA. The polypeptide is Small ribosomal subunit protein bS20 (Rhodococcus jostii (strain RHA1)).